Here is a 764-residue protein sequence, read N- to C-terminus: Reticulon-1 (764 aa).

Disordered stretches follow at residues 1 to 37 (MAANPEVFSGRLEGNVAAARRPGSAQEEEGEAAGGAL), 115 to 147 (PDIKEFSGVGPRSPKEIPTFDSRGLLSSDSGIE), 247 to 400 (LYNS…SEIE), and 455 to 475 (ESCDGSSASEESPKRDQDSPM). Residues 261–282 (VTISFTGMETTLQTEYPENQQG) show a composition bias toward polar residues. Positions 328 to 337 (EEQRKYKISE) are enriched in basic and acidic residues. A Reticulon domain is found at 578-764 (AIELLYWRDI…AKIPGTKQKE (187 aa)). Transmembrane regions (helical) follow at residues 607–627 (FSVVSVIAYLALAALSATISF) and 696–716 (VLMWLLTYVGALFNGLTLLIM).

Its subcellular location is the endoplasmic reticulum membrane. The protein resides in the nucleus. Inhibits amyloid precursor protein processing, probably by blocking BACE1 activity. In Xenopus tropicalis (Western clawed frog), this protein is Reticulon-1.